Here is a 132-residue protein sequence, read N- to C-terminus: Small ribosomal subunit protein uS8 (132 aa).

It belongs to the universal ribosomal protein uS8 family. As to quaternary structure, part of the 30S ribosomal subunit. Contacts proteins S5 and S12.

Functionally, one of the primary rRNA binding proteins, it binds directly to 16S rRNA central domain where it helps coordinate assembly of the platform of the 30S subunit. The polypeptide is Small ribosomal subunit protein uS8 (Borreliella burgdorferi (strain ZS7) (Borrelia burgdorferi)).